The following is a 688-amino-acid chain: Putative proline--tRNA ligase YHR020W (688 aa).

Phosphoserine is present on Ser-149. The residue at position 170 (Thr-170) is a Phosphothreonine. A disordered region spans residues 631–650 (ESSAKKDDGEEFEEDDKAPS). Ser-655 bears the Phosphoserine mark.

Belongs to the class-II aminoacyl-tRNA synthetase family.

It catalyses the reaction tRNA(Pro) + L-proline + ATP = L-prolyl-tRNA(Pro) + AMP + diphosphate. The sequence is that of Putative proline--tRNA ligase YHR020W from Saccharomyces cerevisiae (strain ATCC 204508 / S288c) (Baker's yeast).